Here is a 275-residue protein sequence, read N- to C-terminus: Large ribosomal subunit protein uL2 (275 aa).

Disordered stretches follow at residues 28 to 59 (KPYA…GGHK) and 224 to 275 (AMNP…RHKR). Over residues 35 to 46 (DTQSSTAGRNNN) the composition is skewed to polar residues. The span at 50–59 (TTRHKGGGHK) shows a compositional bias: basic residues.

It belongs to the universal ribosomal protein uL2 family. Part of the 50S ribosomal subunit. Forms a bridge to the 30S subunit in the 70S ribosome.

Functionally, one of the primary rRNA binding proteins. Required for association of the 30S and 50S subunits to form the 70S ribosome, for tRNA binding and peptide bond formation. It has been suggested to have peptidyltransferase activity; this is somewhat controversial. Makes several contacts with the 16S rRNA in the 70S ribosome. The protein is Large ribosomal subunit protein uL2 of Paraburkholderia phymatum (strain DSM 17167 / CIP 108236 / LMG 21445 / STM815) (Burkholderia phymatum).